A 227-amino-acid chain; its full sequence is Glutathione S-transferase U17 (227 aa).

The region spanning 4–83 (SDVKLIGAWA…YIDDTWSSSG (80 aa)) is the GST N-terminal domain. Residues 14 to 15 (SP), 40 to 41 (SK), 54 to 55 (KI), and 67 to 68 (ES) each bind glutathione. Residues 90 to 222 (DPYDRAMARF…KLAEFAKKIF (133 aa)) enclose the GST C-terminal domain.

This sequence belongs to the GST superfamily. Tau family.

It is found in the cytoplasm. It localises to the cytosol. It catalyses the reaction RX + glutathione = an S-substituted glutathione + a halide anion + H(+). Involved in light signaling, mainly phyA-mediated photomorphogenesis and in the integration of various phytohormone signals to modulate various aspects of plant development by affecting glutathione pools. In vitro, possesses glutathione S-transferase activity toward 1-chloro-2,4-dinitrobenzene (CDNB) and benzyl isothiocyanate (BITC). This chain is Glutathione S-transferase U17 (GSTU17), found in Arabidopsis thaliana (Mouse-ear cress).